Consider the following 222-residue polypeptide: Protein-L-isoaspartate O-methyltransferase (222 aa).

Ser65 is an active-site residue.

The protein belongs to the methyltransferase superfamily. L-isoaspartyl/D-aspartyl protein methyltransferase family.

Its subcellular location is the cytoplasm. It carries out the reaction [protein]-L-isoaspartate + S-adenosyl-L-methionine = [protein]-L-isoaspartate alpha-methyl ester + S-adenosyl-L-homocysteine. In terms of biological role, catalyzes the methyl esterification of L-isoaspartyl residues in peptides and proteins that result from spontaneous decomposition of normal L-aspartyl and L-asparaginyl residues. It plays a role in the repair and/or degradation of damaged proteins. The polypeptide is Protein-L-isoaspartate O-methyltransferase (Chlorobium luteolum (strain DSM 273 / BCRC 81028 / 2530) (Pelodictyon luteolum)).